We begin with the raw amino-acid sequence, 508 residues long: Photosystem II CP47 reaction center protein (508 aa).

6 helical membrane passes run 21–36 (SVHI…WAGS), 101–115 (IVLS…IWHW), 140–156 (GIHL…FGAF), 203–218 (IAAG…FHLS), 237–252 (VLSS…AFVV), and 457–472 (SFAL…HGAR).

It belongs to the PsbB/PsbC family. PsbB subfamily. PSII is composed of 1 copy each of membrane proteins PsbA, PsbB, PsbC, PsbD, PsbE, PsbF, PsbH, PsbI, PsbJ, PsbK, PsbL, PsbM, PsbT, PsbX, PsbY, PsbZ, Psb30/Ycf12, at least 3 peripheral proteins of the oxygen-evolving complex and a large number of cofactors. It forms dimeric complexes. The cofactor is Binds multiple chlorophylls. PSII binds additional chlorophylls, carotenoids and specific lipids..

Its subcellular location is the plastid. It localises to the chloroplast thylakoid membrane. Its function is as follows. One of the components of the core complex of photosystem II (PSII). It binds chlorophyll and helps catalyze the primary light-induced photochemical processes of PSII. PSII is a light-driven water:plastoquinone oxidoreductase, using light energy to abstract electrons from H(2)O, generating O(2) and a proton gradient subsequently used for ATP formation. The sequence is that of Photosystem II CP47 reaction center protein from Pelargonium hortorum (Common geranium).